Here is a 221-residue protein sequence, read N- to C-terminus: Aspartic protease inhibitor 1 (221 aa).

The first 23 residues, 1-23, serve as a signal peptide directing secretion; the sequence is MMKCLFFLCLCLFPILVFSSTFT. A propeptide spanning residues 24–32 is cleaved from the precursor; sequence SQNPINLPS. A Vacuolar targeting signal motif is present at residues 26 to 31; sequence NPINLP. The N-linked (GlcNAc...) asparagine glycan is linked to Asn51. Intrachain disulfides connect Cys80–Cys125 and Cys174–Cys186.

The protein belongs to the protease inhibitor I3 (leguminous Kunitz-type inhibitor) family. In terms of tissue distribution, tubers, young leaves and flower bud. Not detected in root, stem or mature leaves.

The protein localises to the vacuole. Inhibitor of cathepsin D (aspartic protease). May also inhibit trypsin and chymotrypsin (serine proteases). Protects the plant by inhibiting proteases of invading organisms. The chain is Aspartic protease inhibitor 1 from Solanum tuberosum (Potato).